The chain runs to 471 residues: 3-hydroxylaminophenol mutase (471 aa).

Residues 15 to 100 (NDVKFVDFRF…TCDVVEPSDG (86 aa)) enclose the GS beta-grasp domain. In terms of domain architecture, GS catalytic spans 107-471 (PRSIAKRAEA…PVEFEMYYSL (365 aa)).

The protein belongs to the glutamine synthetase family.

It catalyses the reaction 3-hydroxyaminophenol = aminohydroquinone. With respect to regulation, is inhibited by H(2)O(2). 1,10-phenanthroline inhibits the activity slightly, but other metal cation chelators such as EDTA or tiron have no effect on the activity. Divalent metal cations and hydroxylamine have also no effect on the activity. Due to the relationship of the protein with glutamine synthetases, glutamate and glutamine were tested as inhibitors; neither preincubation of the compounds with the enzyme nor their addition to the assay buffer affected 3HAP mutase activity. In terms of biological role, catalyzes the isomerization of 3-hydroxylaminophenol (3HAP) to aminohydroquinone, a step in the degradative pathway of 3-nitrophenol. The enzymatic reaction is regiospecific since it leads to the formation of aminohydroquinone exclusively, without producing the isomeric 4-aminocatechol. Can also isomerize other hydroxylaminoaromatic compounds, such as hydroxylaminobenzene to a mixture of 2-aminophenol and 4-aminophenol, 4-hydroxylaminotoluene to 6-amino-m-cresol, and 2-chloro-5-hydroxylaminophenol to 2-amino-5-chlorohydroquinone. Does not act on 4-hydroxylaminobenzoate. The protein is 3-hydroxylaminophenol mutase of Cupriavidus pinatubonensis (strain JMP 134 / LMG 1197) (Cupriavidus necator (strain JMP 134)).